Here is a 156-residue protein sequence, read N- to C-terminus: 1-methylthio-D-xylulose 5-phosphate methylsulfurylase (156 aa).

In terms of domain architecture, Cupin type-2 spans 55–122 (YFEVGPGGHS…ADEALGFLCM (68 aa)). Positions 67, 69, 73, and 107 each coordinate Mn(2+). The active site involves Cys-121.

The catalysed reaction is S-methyl-1-thio-D-xylulose 5-phosphate + glutathione = S-(methylsulfanyl)glutathione + 1-deoxy-D-xylulose 5-phosphate. It carries out the reaction S-(methylsulfanyl)glutathione + AH2 = methanethiol + glutathione + A. Its pathway is amino-acid biosynthesis; L-methionine biosynthesis via salvage pathway. It participates in metabolic intermediate biosynthesis; 1-deoxy-D-xylulose 5-phosphate biosynthesis. Functionally, catalyzes the formation of S-(methylsulfanyl)glutathione and 1-deoxy-D-xylulose 5-phosphate (DXP) from 1-methylthioxylulose 5-phosphate (MTXu-5P). The S-(methylsulfanyl)glutathione is reductively cleaved to relase methanethiol in a second reaction. Involved in the MTA-isoprenoid shunt of the methionine salvage pathway. This Rhodospirillum rubrum (strain ATCC 11170 / ATH 1.1.1 / DSM 467 / LMG 4362 / NCIMB 8255 / S1) protein is 1-methylthio-D-xylulose 5-phosphate methylsulfurylase.